The chain runs to 194 residues: Peptidyl-tRNA hydrolase (194 aa).

Histidine 22 functions as the Proton acceptor in the catalytic mechanism. Tyrosine 67, asparagine 69, and asparagine 115 together coordinate tRNA.

It belongs to the PTH family. As to quaternary structure, monomer.

It localises to the cytoplasm. The enzyme catalyses an N-acyl-L-alpha-aminoacyl-tRNA + H2O = an N-acyl-L-amino acid + a tRNA + H(+). Its function is as follows. Hydrolyzes ribosome-free peptidyl-tRNAs (with 1 or more amino acids incorporated), which drop off the ribosome during protein synthesis, or as a result of ribosome stalling. Functionally, catalyzes the release of premature peptidyl moieties from peptidyl-tRNA molecules trapped in stalled 50S ribosomal subunits, and thus maintains levels of free tRNAs and 50S ribosomes. The polypeptide is Peptidyl-tRNA hydrolase (Granulibacter bethesdensis (strain ATCC BAA-1260 / CGDNIH1)).